The primary structure comprises 257 residues: Pimeloyl-[acyl-carrier protein] methyl ester esterase (257 aa).

In terms of domain architecture, AB hydrolase-1 spans H15–H241. Residues W22, S82–L83, and F143–Q147 contribute to the substrate site. Catalysis depends on S82, which acts as the Nucleophile. Catalysis depends on residues D207 and H235. H235 contacts substrate.

This sequence belongs to the AB hydrolase superfamily. Carboxylesterase BioH family. In terms of assembly, monomer.

The protein localises to the cytoplasm. It carries out the reaction 6-carboxyhexanoyl-[ACP] methyl ester + H2O = 6-carboxyhexanoyl-[ACP] + methanol + H(+). The protein operates within cofactor biosynthesis; biotin biosynthesis. The physiological role of BioH is to remove the methyl group introduced by BioC when the pimeloyl moiety is complete. It allows to synthesize pimeloyl-ACP via the fatty acid synthetic pathway through the hydrolysis of the ester bonds of pimeloyl-ACP esters. This chain is Pimeloyl-[acyl-carrier protein] methyl ester esterase, found in Klebsiella pneumoniae (strain 342).